Reading from the N-terminus, the 323-residue chain is tRNA dimethylallyltransferase (323 aa).

Residue 12-19 (GPTAAGKT) coordinates ATP. 14 to 19 (TAAGKT) contacts substrate. 2 interaction with substrate tRNA regions span residues 37–40 (DSAL) and 161–165 (QRLIR).

This sequence belongs to the IPP transferase family. As to quaternary structure, monomer. Requires Mg(2+) as cofactor.

It catalyses the reaction adenosine(37) in tRNA + dimethylallyl diphosphate = N(6)-dimethylallyladenosine(37) in tRNA + diphosphate. Its function is as follows. Catalyzes the transfer of a dimethylallyl group onto the adenine at position 37 in tRNAs that read codons beginning with uridine, leading to the formation of N6-(dimethylallyl)adenosine (i(6)A). This is tRNA dimethylallyltransferase from Pseudomonas putida (strain ATCC 47054 / DSM 6125 / CFBP 8728 / NCIMB 11950 / KT2440).